The sequence spans 470 residues: Sulfate adenylyltransferase subunit 1 (470 aa).

The tr-type G domain maps to 22–236 (KELLRFITCG…YLETIKIDYA (215 aa)). The tract at residues 31 to 38 (GSVDDGKS) is G1. A GTP-binding site is contributed by 31-38 (GSVDDGKS). The segment at 89–93 (GITID) is G2. Residues 110 to 113 (DTPG) are G3. GTP contacts are provided by residues 110 to 114 (DTPGH) and 165 to 168 (NKMD). The interval 165-168 (NKMD) is G4. The segment at 202–204 (SAL) is G5.

This sequence belongs to the TRAFAC class translation factor GTPase superfamily. Classic translation factor GTPase family. CysN/NodQ subfamily. As to quaternary structure, heterodimer composed of CysD, the smaller subunit, and CysN.

It carries out the reaction sulfate + ATP + H(+) = adenosine 5'-phosphosulfate + diphosphate. It participates in sulfur metabolism; hydrogen sulfide biosynthesis; sulfite from sulfate: step 1/3. Functionally, with CysD forms the ATP sulfurylase (ATPS) that catalyzes the adenylation of sulfate producing adenosine 5'-phosphosulfate (APS) and diphosphate, the first enzymatic step in sulfur assimilation pathway. APS synthesis involves the formation of a high-energy phosphoric-sulfuric acid anhydride bond driven by GTP hydrolysis by CysN coupled to ATP hydrolysis by CysD. The protein is Sulfate adenylyltransferase subunit 1 of Francisella tularensis subsp. novicida (strain U112).